Reading from the N-terminus, the 346-residue chain is Peroxidase 37 (346 aa).

An N-terminal signal peptide occupies residues 1–22 (MHSSLIKLGFLLLLIQVSLSHA). Glutamine 23 is modified (pyrrolidone carboxylic acid). Intrachain disulfides connect cysteine 33-cysteine 113, cysteine 66-cysteine 71, cysteine 119-cysteine 323, and cysteine 199-cysteine 231. The active-site Proton acceptor is the histidine 64. The Ca(2+) site is built by aspartate 65, valine 68, glycine 70, aspartate 72, and serine 74. An N-linked (GlcNAc...) asparagine glycan is attached at asparagine 79. Substrate is bound at residue proline 161. Residue histidine 192 coordinates heme b. Threonine 193 contributes to the Ca(2+) binding site. Asparagine 208 and asparagine 236 each carry an N-linked (GlcNAc...) asparagine glycan. Ca(2+) contacts are provided by aspartate 244, threonine 247, and aspartate 252.

Belongs to the peroxidase family. Classical plant (class III) peroxidase subfamily. Heme b serves as cofactor. Ca(2+) is required as a cofactor.

The protein localises to the secreted. Its subcellular location is the vacuole. The enzyme catalyses 2 a phenolic donor + H2O2 = 2 a phenolic radical donor + 2 H2O. Functionally, removal of H(2)O(2), oxidation of toxic reductants, biosynthesis and degradation of lignin, suberization, auxin catabolism, response to environmental stresses such as wounding, pathogen attack and oxidative stress. These functions might be dependent on each isozyme/isoform in each plant tissue. This is Peroxidase 37 (PER37) from Arabidopsis thaliana (Mouse-ear cress).